A 155-amino-acid polypeptide reads, in one-letter code: Small ribosomal subunit protein uS7c (155 aa).

Belongs to the universal ribosomal protein uS7 family. In terms of assembly, part of the 30S ribosomal subunit.

Its subcellular location is the plastid. The protein resides in the chloroplast. One of the primary rRNA binding proteins, it binds directly to 16S rRNA where it nucleates assembly of the head domain of the 30S subunit. This is Small ribosomal subunit protein uS7c (rps7) from Aristolochia macrophylla (Dutchman's pipe vine).